A 254-amino-acid chain; its full sequence is Thiazole synthase (254 aa).

The active-site Schiff-base intermediate with DXP is K95. Residues G156, 182-183, and 204-205 contribute to the 1-deoxy-D-xylulose 5-phosphate site; these read AG and NT.

This sequence belongs to the ThiG family. Homotetramer. Forms heterodimers with either ThiH or ThiS.

It is found in the cytoplasm. It catalyses the reaction [ThiS sulfur-carrier protein]-C-terminal-Gly-aminoethanethioate + 2-iminoacetate + 1-deoxy-D-xylulose 5-phosphate = [ThiS sulfur-carrier protein]-C-terminal Gly-Gly + 2-[(2R,5Z)-2-carboxy-4-methylthiazol-5(2H)-ylidene]ethyl phosphate + 2 H2O + H(+). Its pathway is cofactor biosynthesis; thiamine diphosphate biosynthesis. Catalyzes the rearrangement of 1-deoxy-D-xylulose 5-phosphate (DXP) to produce the thiazole phosphate moiety of thiamine. Sulfur is provided by the thiocarboxylate moiety of the carrier protein ThiS. In vitro, sulfur can be provided by H(2)S. This chain is Thiazole synthase, found in Shewanella oneidensis (strain ATCC 700550 / JCM 31522 / CIP 106686 / LMG 19005 / NCIMB 14063 / MR-1).